Consider the following 285-residue polypeptide: CBY1-interacting BAR domain-containing protein 1-B (285 aa).

The transit peptide at 1 to 48 (MSQTPEARTRDNQTRQIQESVNNVEKHFGELCQIFAGYVRKTARLRDK) directs the protein to the mitochondrion. The segment at 11–221 (DNQTRQIQES…DIDEEEDLEV (211 aa)) is BAR-like. Positions 142 to 184 (RQIISQAETELQRATMDAARISQQLEETIDNFEKQKIKDIKKL) form a coiled coil. Polar residues predominate over residues 241–261 (NSRSGSTSRAPSVISQPPGNR). The segment at 241 to 285 (NSRSGSTSRAPSVISQPPGNRQKNRMEDDEDGEDDNDENSTEDEN) is disordered. Acidic residues predominate over residues 267 to 285 (EDDEDGEDDNDENSTEDEN).

It belongs to the CIBAR family.

The protein resides in the cytoplasm. It localises to the cytoskeleton. It is found in the microtubule organizing center. Its subcellular location is the centrosome. The protein localises to the centriole. The protein resides in the cell projection. It localises to the cilium. It is found in the nucleus. Its subcellular location is the mitochondrion inner membrane. The protein localises to the flagellum. Its function is as follows. Plays a critical role in regulating mitochondrial ultrastructure and function by maintaining the integrity of mitochondrial morphology, particularly the organization of cristae. Plays a crucial role in ciliogenesis. Plays a key role in the correct positioning of the annulus, a septin-based ring structure in the sperm flagellum, serving both as a physical barrier and a membrane diffusion barrier that separates the midpiece (MP) from the principal piece (PP). This is CBY1-interacting BAR domain-containing protein 1-B from Xenopus laevis (African clawed frog).